The following is a 484-amino-acid chain: Replication factor C large subunit (484 aa).

Position 46–53 (46–53 (GPPGSGKT)) interacts with ATP. 3 stretches are compositionally biased toward basic and acidic residues: residues 419–432 (VKTE…KTKE), 442–451 (RISEPPEPLK), and 459–478 (KSVE…KKQA). The tract at residues 419-484 (VKTETPKKKE…KKQATLDSFF (66 aa)) is disordered.

The protein belongs to the activator 1 small subunits family. RfcL subfamily. Heteromultimer composed of small subunits (RfcS) and large subunits (RfcL).

Part of the RFC clamp loader complex which loads the PCNA sliding clamp onto DNA. This Methanococcus maripaludis (strain C5 / ATCC BAA-1333) protein is Replication factor C large subunit.